We begin with the raw amino-acid sequence, 474 residues long: L-arabinose isomerase (474 aa).

Residues Glu-306, Glu-331, His-348, and His-447 each contribute to the Mn(2+) site.

It belongs to the arabinose isomerase family. It depends on Mn(2+) as a cofactor.

The enzyme catalyses beta-L-arabinopyranose = L-ribulose. The protein operates within carbohydrate degradation; L-arabinose degradation via L-ribulose; D-xylulose 5-phosphate from L-arabinose (bacterial route): step 1/3. Catalyzes the conversion of L-arabinose to L-ribulose. This Pediococcus pentosaceus (strain ATCC 25745 / CCUG 21536 / LMG 10740 / 183-1w) protein is L-arabinose isomerase.